Reading from the N-terminus, the 64-residue chain is Large ribosomal subunit protein bL28 (64 aa).

It belongs to the bacterial ribosomal protein bL28 family.

The sequence is that of Large ribosomal subunit protein bL28 from Campylobacter jejuni subsp. doylei (strain ATCC BAA-1458 / RM4099 / 269.97).